Here is a 251-residue protein sequence, read N- to C-terminus: 3-deoxy-manno-octulosonate cytidylyltransferase (251 aa).

Belongs to the KdsB family.

It is found in the cytoplasm. It carries out the reaction 3-deoxy-alpha-D-manno-oct-2-ulosonate + CTP = CMP-3-deoxy-beta-D-manno-octulosonate + diphosphate. The protein operates within nucleotide-sugar biosynthesis; CMP-3-deoxy-D-manno-octulosonate biosynthesis; CMP-3-deoxy-D-manno-octulosonate from 3-deoxy-D-manno-octulosonate and CTP: step 1/1. Its pathway is bacterial outer membrane biogenesis; lipopolysaccharide biosynthesis. Activates KDO (a required 8-carbon sugar) for incorporation into bacterial lipopolysaccharide in Gram-negative bacteria. The sequence is that of 3-deoxy-manno-octulosonate cytidylyltransferase from Geotalea uraniireducens (strain Rf4) (Geobacter uraniireducens).